The sequence spans 342 residues: DNA repair protein RAD51 homolog 1 (342 aa).

Residues 1–24 (MTTMEQRRNQNAVQQQDDEETQHG) form a disordered region. Positions 51–80 (TVEGVAYTPRKDLLQIKGISDAKVDKIVEA) constitute a HhH domain. The 215-residue stretch at 100-314 (QEIIQITSGS…LRKGRAEERI (215 aa)) folds into the FtsK domain. 130–137 (GEFRSGKT) provides a ligand contact to ATP.

Belongs to the RecA family. RAD51 subfamily. In terms of assembly, self-associates and interacts with XRCC3. Binds to RAD54/CHR25. Interacts with BRCA2A and BRCA2B. Can form a tripartite complex with both BRCA2B and DSS1(I). In terms of tissue distribution, detected in various tissues. Higher expression in reproductive tissues than in vegetative tissues, with the highest expression level in young flower buds. At cellular level, is expressed at low levels in flower primordia, then at higher levels in young anthers and at highest levels in both females and males meiocytes. Not detected in gametophytes.

It is found in the nucleus. Binds to single and double-stranded DNA and exhibits DNA-dependent ATPase activity. Unwinds duplex DNA. Component of the meiotic recombination pathway. Seems to play a role in mediating chromosome homology search, chromosome pairing and synapsis at early stages and probably chromosome crossing-over at later stages in meiosis. Probably is involved in the repair of meiotic double strand breaks (DBSs) generated by AtSPO11-1 and in homologous recombination. Its function is dispensable for vegetative growth and root mitosis. The protein is DNA repair protein RAD51 homolog 1 of Arabidopsis thaliana (Mouse-ear cress).